The primary structure comprises 633 residues: UvrABC system protein C (633 aa).

The GIY-YIG domain maps to 21–100 (TDPGVYKFLD…IKELQPRYNV (80 aa)). The region spanning 214-249 (QELMDLLKDEMQRQSDAHNFEEAARLRDQVKALKDY) is the UVR domain.

The protein belongs to the UvrC family. In terms of assembly, interacts with UvrB in an incision complex.

It is found in the cytoplasm. In terms of biological role, the UvrABC repair system catalyzes the recognition and processing of DNA lesions. UvrC both incises the 5' and 3' sides of the lesion. The N-terminal half is responsible for the 3' incision and the C-terminal half is responsible for the 5' incision. The polypeptide is UvrABC system protein C (Salinibacter ruber (strain DSM 13855 / M31)).